A 218-amino-acid chain; its full sequence is NADH dehydrogenase [ubiquinone] iron-sulfur protein 7, mitochondrial (218 aa).

Residues 34–48 (LPALSPSTSPTSYTR) are compositionally biased toward low complexity. Positions 34 to 61 (LPALSPSTSPTSYTRPGPPSTSPPPPGL) are disordered. The segment covering 49-60 (PGPPSTSPPPPG) has biased composition (pro residues). Residues C93, C94, C158, and C188 each coordinate [4Fe-4S] cluster.

The protein belongs to the complex I 20 kDa subunit family. In terms of assembly, complex I is composed of at least 49 different subunits. This is a component of the iron-sulfur (IP) fragment of the enzyme. [4Fe-4S] cluster is required as a cofactor.

The protein resides in the mitochondrion. The catalysed reaction is a ubiquinone + NADH + 5 H(+)(in) = a ubiquinol + NAD(+) + 4 H(+)(out). Its function is as follows. Core subunit of the mitochondrial membrane respiratory chain NADH dehydrogenase (Complex I) that is believed to belong to the minimal assembly required for catalysis. Complex I functions in the transfer of electrons from NADH to the respiratory chain. The immediate electron acceptor for the enzyme is believed to be ubiquinone. The chain is NADH dehydrogenase [ubiquinone] iron-sulfur protein 7, mitochondrial from Arabidopsis thaliana (Mouse-ear cress).